Reading from the N-terminus, the 103-residue chain is O2 contryphan Vc1 (103 aa).

Positions 1 to 23 (MGKLTILFLVAAALLSTQVMVQG) are cleaved as a signal peptide. Residues 24 to 67 (DGAHERTEAEEPQHHGAKRQDGTGGYPVDDVDMMQRIFRTPLKR) constitute a propeptide that is removed on maturation. Positions 25–44 (GAHERTEAEEPQHHGAKRQD) are enriched in basic and acidic residues. The interval 25-50 (GAHERTEAEEPQHHGAKRQDGTGGYP) is disordered. Q68 carries the pyrrolidone carboxylic acid modification. C70 and C83 are disulfide-bonded. The propeptide occupies 99–103 (RRGRQ).

This sequence belongs to the O2 superfamily. Post-translationally, pyrrolidone carboxylic acid at position 1 has no significant effect on the structure of contryphan-Vc1. Expressed by the venom gland.

It is found in the secreted. Its function is as follows. Unknown. Intracranial injection of the peptide into mice does not produce toxic effects. In addition, the peptide does not produce any observable changes to normal or depolarization-induced intracellular calcium levels in mouse dorsal root ganglion cells. The protein is O2 contryphan Vc1 of Conus victoriae (Queen Victoria cone).